Here is a 112-residue protein sequence, read N- to C-terminus: MAESFTTTNRYFDNKHYPRGFSRHGDFTIKEAQLLERHGYAFNELDLGKREPVTEEEKLFVAVCRGEREPVTEAERVWSKYMTRIKRPKRFHTLSGGKPQVEGAEDYTDSDD.

Positions 91 to 112 are disordered; the sequence is FHTLSGGKPQVEGAEDYTDSDD. Residues 103–112 are compositionally biased toward acidic residues; sequence GAEDYTDSDD.

Belongs to the MaoP family.

Functionally, involved in the organization of the Ori region of the chromosome into a macrodomain (MD). It constrains DNA mobility in the Ori macrodomain and limits long-distance DNA interactions with other chromosomal regions. The protein is Macrodomain Ori protein of Escherichia coli O157:H7.